We begin with the raw amino-acid sequence, 321 residues long: Protein translocase subunit SecF (321 aa).

A run of 6 helical transmembrane segments spans residues 23–43 (VWLI…FSWT), 158–178 (LQTT…YISI), 189–209 (LLAL…LGII), 217–237 (LFAV…VVVF), 258–280 (FAVS…PLIA), and 290–312 (YWFA…ALVP).

This sequence belongs to the SecD/SecF family. SecF subfamily. Forms a complex with SecD. Part of the essential Sec protein translocation apparatus which comprises SecA, SecYEG and auxiliary proteins SecDF. Other proteins may also be involved.

It localises to the cell inner membrane. Part of the Sec protein translocase complex. Interacts with the SecYEG preprotein conducting channel. SecDF uses the proton motive force (PMF) to complete protein translocation after the ATP-dependent function of SecA. Functionally, probably participates in protein translocation into and across both the cytoplasmic and thylakoid membranes in cyanobacterial cells. The sequence is that of Protein translocase subunit SecF from Prochlorococcus marinus (strain SARG / CCMP1375 / SS120).